The following is a 165-amino-acid chain: Glucosamine 6-phosphate N-acetyltransferase (165 aa).

The region spanning 22-165 (FKVRPLAKDD…DDCNFMTQRF (144 aa)) is the N-acetyltransferase domain. Substrate is bound by residues threonine 44, 92 to 95 (KFIH), and 104 to 106 (EDV). 114-119 (RQKLGA) serves as a coordination point for acetyl-CoA. Residues 135-136 (YK) and arginine 164 each bind substrate.

The protein belongs to the acetyltransferase family. GNA1 subfamily.

The catalysed reaction is D-glucosamine 6-phosphate + acetyl-CoA = N-acetyl-D-glucosamine 6-phosphate + CoA + H(+). It participates in nucleotide-sugar biosynthesis; UDP-N-acetyl-alpha-D-glucosamine biosynthesis; N-acetyl-alpha-D-glucosamine 1-phosphate from alpha-D-glucosamine 6-phosphate (route I): step 1/2. This Caenorhabditis elegans protein is Glucosamine 6-phosphate N-acetyltransferase (gna-1).